Here is a 319-residue protein sequence, read N- to C-terminus: Large ribosomal subunit protein uL10 (319 aa).

Positions 286–319 are disordered; that stretch reads AGDSGASAAPKEEEKAAEPEEESDEEMGFSLFDD. Residues 304-319 show a composition bias toward acidic residues; the sequence is PEEESDEEMGFSLFDD.

Belongs to the universal ribosomal protein uL10 family. P0 forms a pentameric complex by interaction with dimers of P1 and P2. In terms of processing, phosphorylated.

In terms of biological role, ribosomal protein P0 is the functional equivalent of E.coli protein L10. The sequence is that of Large ribosomal subunit protein uL10 (RP-P0) from Zea mays (Maize).